We begin with the raw amino-acid sequence, 677 residues long: Protein windpipe (677 aa).

A signal peptide spans 1–20 (MERVHLTAWLALFLIVVANA). Over 21–451 (TPTPARTPTG…IGKPKDDSSA (431 aa)) the chain is Extracellular. Asn53 and Asn80 each carry an N-linked (GlcNAc...) asparagine glycan. LRR repeat units lie at residues 91–116 (LPEL…GLKR), 118–133 (NLKH…RKLP), 134–156 (QHLQ…LTHM), and 158–183 (QLHQ…NWLV). N-linked (GlcNAc...) asparagine glycans are attached at residues Asn145 and Asn170. The region spanning 184-216 (ERIVYMEHPVVCSYPLEFRGRSWLQLKQDEICK) is the LRRCT domain. Disordered stretches follow at residues 264 to 285 (AKKV…SGDL), 298 to 317 (TVAE…ASPS), and 325 to 385 (KDED…TVFS). Over residues 347-372 (SKVKITSEDDIDSDGKPEESDVRPLE) the composition is skewed to basic and acidic residues. Residues 374-385 (PENSENPDTVFS) show a composition bias toward polar residues. Residues 452-472 (IYYLLAVIGLIVVGLVLFVAI) traverse the membrane as a helical segment. Residues 473-677 (KRCKYDSNAA…EPTHQVINGH (205 aa)) are Cytoplasmic-facing. Disordered stretches follow at residues 502 to 523 (LGKP…LIGE) and 539 to 677 (NGEA…INGH). Low complexity predominate over residues 595–607 (AQQQQLAEQNNNE).

As to quaternary structure, interacts with dome; the interaction promotes internalization of dome and its subsequent lysosomal degradation. In adult intestine, expressed in both small progenitor cells and large nuclei enterocytes (at protein level). During embryogenesis, restricted to the developing trachea.

The protein resides in the cell membrane. Functionally, plays a role in negative regulation of the JAK/STAT pathway by binding to the receptor dome and promoting its internalization for subsequent lysosomal degradation, thereby reducing JAK/STAT signaling. The chain is Protein windpipe from Drosophila melanogaster (Fruit fly).